Here is a 220-residue protein sequence, read N- to C-terminus: Antistasin (220 aa).

Residues 1 to 19 (MNYLFVFLALSAAVTFANA) form the signal peptide. Antistasin-like domains follow at residues 21 to 46 (CNKI…ICKC), 54 to 79 (CSNR…ICRC), 91 to 117 (CDGL…KCEC), 120 to 145 (CKQF…TCKC), 154 to 180 (CDDL…KCEC), and 183 to 208 (CKNF…TCKC).

Belongs to the protease inhibitor I15 (antistasin) family. In terms of tissue distribution, gland cells. It is more strongly expressed in the head than in the gastric tissue.

It is found in the secreted. Its function is as follows. This highly disulfide-bonded protein is a potent inhibitor of factor Xa. Facilitates digestion of tissues and may also protect the gastric tissues from its own digestive enzymes. May have therapeutic utility as an anticoagulant. Also exhibits a strong metastatic activity. The protein is Antistasin of Hydra vulgaris (Hydra).